The sequence spans 504 residues: ATP synthase subunit alpha (504 aa).

169–176 (GDRQTGKT) lines the ATP pocket.

Belongs to the ATPase alpha/beta chains family. As to quaternary structure, F-type ATPases have 2 components, CF(1) - the catalytic core - and CF(0) - the membrane proton channel. CF(1) has five subunits: alpha(3), beta(3), gamma(1), delta(1), epsilon(1). CF(0) has three main subunits: a(1), b(2) and c(9-12). The alpha and beta chains form an alternating ring which encloses part of the gamma chain. CF(1) is attached to CF(0) by a central stalk formed by the gamma and epsilon chains, while a peripheral stalk is formed by the delta and b chains.

It is found in the cell membrane. The catalysed reaction is ATP + H2O + 4 H(+)(in) = ADP + phosphate + 5 H(+)(out). Functionally, produces ATP from ADP in the presence of a proton gradient across the membrane. The alpha chain is a regulatory subunit. In Clostridium botulinum (strain Eklund 17B / Type B), this protein is ATP synthase subunit alpha.